The following is a 334-amino-acid chain: Cytoskeleton protein RodZ (334 aa).

Residues 1-111 lie on the Cytoplasmic side of the membrane; the sequence is MNTEATHDQN…LGKRRKKRDG (111 aa). One can recognise an HTH cro/C1-type domain in the interval 19–71; it reads LRNAREQLGLSQQAVAERLCLKVSTVRDIEEDKAPSDLASTFLRGYIRSYARL. The segment at residues 30–49 is a DNA-binding region (H-T-H motif); it reads QQAVAERLCLKVSTVRDIEE. The helical; Signal-anchor for type II membrane protein transmembrane segment at 112–132 threads the bilayer; it reads WLMSFTWLVLFVVVGLTGAWW. Residues 133 to 334 lie on the Periplasmic side of the membrane; sequence WQNHKAQQEE…TLNAEPTPAQ (202 aa). Disordered regions lie at residues 155–207 and 221–241; these read NADK…ATQN and ATSAAPAATETPSALPTSQAG. Over residues 176–207 the composition is skewed to low complexity; the sequence is TTPAQTAPAPATPVDSTAATQTPAATATATQN.

It belongs to the RodZ family.

The protein resides in the cell inner membrane. Its function is as follows. Cytoskeletal protein that is involved in cell-shape control through regulation of the length of the long axis. The protein is Cytoskeleton protein RodZ of Salmonella schwarzengrund (strain CVM19633).